A 107-amino-acid chain; its full sequence is MSEETLAYIESVIAERRKASPEDSYVSSLFHRGTAHIAQKVGEEAVETVIAALAQDKKSLESEAADLIFHLAVLLADRGSSFENVFSELRRREGVSGHAEKAARPKS.

Belongs to the PRA-PH family.

Its subcellular location is the cytoplasm. It carries out the reaction 1-(5-phospho-beta-D-ribosyl)-ATP + H2O = 1-(5-phospho-beta-D-ribosyl)-5'-AMP + diphosphate + H(+). The protein operates within amino-acid biosynthesis; L-histidine biosynthesis; L-histidine from 5-phospho-alpha-D-ribose 1-diphosphate: step 2/9. This chain is Phosphoribosyl-ATP pyrophosphatase, found in Zymomonas mobilis subsp. mobilis (strain ATCC 31821 / ZM4 / CP4).